The primary structure comprises 231 residues: Eukaryotic translation initiation factor 4E-1 (231 aa).

EIF4G-binding stretches follow at residues 56–59 (HPLE) and 66–102 (FDNP…NNIH). Residues 74 to 79 (RQTAWG), lysine 106, and 124 to 125 (WE) contribute to the mRNA site. The cysteines at positions 129 and 167 are disulfide-linked. The tract at residues 150 to 159 (YTLLAMIGHQ) is EIF4G-binding. MRNA-binding positions include 174–179 (RAKGEK) and 219–223 (KRLDR).

The protein belongs to the eukaryotic initiation factor 4E family. EIF4F is a multi-subunit complex, the composition of which varies with external and internal environmental conditions. It is composed of at least EIF4A, EIF4E and EIF4G. EIF4E is also known to interact with other partners. In higher plants two isoforms of EIF4F have been identified, named isoform EIF4F and isoform EIF(iso)4F. Isoform EIF4F has subunits p220 and p26, whereas isoform EIF(iso)4F has subunits p82 and p28. In terms of assembly, (Microbial infection) Interacts with potyvirus viral genome-linked protein (VPg); mostly with tobacco etch virus (TEV-HAT) VPg and, to a lower extent, with potato virus Y (PVY-LYE84 and PVY-LYE90) and pepper mottle virus (PepMoV) VPg. In terms of processing, according to the redox status, the Cys-129-Cys-167 disulfide bridge may have a role in regulating protein function by affecting its ability to bind capped mRNA.

Its subcellular location is the nucleus. The protein resides in the cytoplasm. Functionally, component of the protein complex eIF4F, which is involved in the recognition of the mRNA cap, ATP-dependent unwinding of 5'-terminal secondary structure and recruitment of mRNA to the ribosome. Recognizes and binds the 7-methylguanosine-containing mRNA cap during an early step in the initiation of protein synthesis and facilitates ribosome binding by inducing the unwinding of the mRNAs secondary structures. Key component of recessive resistance to potyviruses. In terms of biological role, (Microbial infection) Susceptibility host factor required for viral infection (e.g. potato virus Y (PVY), pepper mottle virus (PepMoV) and tobacco etch virus (TEV)) by recruiting viral RNAs to the host ribosomal complex via an interaction with viral genome-linked protein (VPg). The sequence is that of Eukaryotic translation initiation factor 4E-1 from Solanum lycopersicum (Tomato).